The primary structure comprises 376 residues: Cysteine synthase 1 (376 aa).

The N-terminal 16 residues, 1 to 16 (MFRHGVRTFATTSLRR), are a transit peptide targeting the mitochondrion. K79 is subject to N6-(pyridoxal phosphate)lysine. Residues N109, 215–219 (GTGGT), and S314 each bind pyridoxal 5'-phosphate.

This sequence belongs to the cysteine synthase/cystathionine beta-synthase family. It depends on pyridoxal 5'-phosphate as a cofactor.

Its subcellular location is the mitochondrion. The enzyme catalyses O-succinyl-L-serine + hydrogen sulfide = L-cysteine + succinate. The catalysed reaction is O-acetyl-L-serine + hydrogen sulfide = L-cysteine + acetate. It functions in the pathway amino-acid biosynthesis; L-cysteine biosynthesis; L-cysteine from L-serine: step 2/2. Functionally, catalyzes the conversion of O-succinyl-L-serine into cysteine, the last step in the cysteine biosynthesis pathway. Can also use O-acetyl-L-serine. The chain is Cysteine synthase 1 (cys-17) from Neurospora crassa (strain ATCC 24698 / 74-OR23-1A / CBS 708.71 / DSM 1257 / FGSC 987).